The sequence spans 33 residues: Photosystem II reaction center protein Psb30 (33 aa).

A helical membrane pass occupies residues 5 to 25 (LIVQLGSLTLITLAGPLVVVL).

Belongs to the Psb30/Ycf12 family. As to quaternary structure, PSII is composed of 1 copy each of membrane proteins PsbA, PsbB, PsbC, PsbD, PsbE, PsbF, PsbH, PsbI, PsbJ, PsbK, PsbL, PsbM, PsbT, PsbY, PsbZ, Psb30/Ycf12, peripheral proteins of the oxygen-evolving complex and a large number of cofactors. It forms dimeric complexes.

It localises to the plastid. The protein localises to the chloroplast thylakoid membrane. A core subunit of photosystem II (PSII), probably helps stabilize the reaction center. The protein is Photosystem II reaction center protein Psb30 of Euglena deses.